The primary structure comprises 158 residues: Ribosome maturation factor RimP (158 aa).

The protein belongs to the RimP family.

It localises to the cytoplasm. Required for maturation of 30S ribosomal subunits. The polypeptide is Ribosome maturation factor RimP (Pediococcus pentosaceus (strain ATCC 25745 / CCUG 21536 / LMG 10740 / 183-1w)).